Reading from the N-terminus, the 450-residue chain is TNF receptor-associated factor family protein DDB_G0273433/DDB_G0273509 (450 aa).

The RING-type; degenerate zinc finger occupies 26 to 73 (CQICFNSVIDFKKETLSFDVLQCRNGHISCHECWNRQLSIKQECPSCK). 2 consecutive TRAF-type zinc fingers follow at residues 129–185 (HHLK…KKLN) and 186–243 (KHIE…SQLS). Residues 257 to 297 (QNVMDLHKLQLDECNQDYRKLEKQNRDLEKRLFYLESTVNS) adopt a coiled-coil conformation. Residues 319–439 (VYKGKWVINN…NNSLTISISI (121 aa)) form the MATH domain.

This sequence belongs to the TNF receptor-associated factor family. A subfamily.

Its subcellular location is the cytoplasm. Its function is as follows. Probable adapter protein and signal transducer that links members of the tumor necrosis factor receptor family to different signaling pathways by association with the receptor cytoplasmic domain and kinases. The sequence is that of TNF receptor-associated factor family protein DDB_G0273433/DDB_G0273509 from Dictyostelium discoideum (Social amoeba).